A 368-amino-acid chain; its full sequence is Xaa-Pro dipeptidase (368 aa).

5 residues coordinate Mn(2+): Asp223, Asp234, His298, Glu327, and Glu341.

It belongs to the peptidase M24B family. The cofactor is Mn(2+).

The protein resides in the cytoplasm. It catalyses the reaction Xaa-L-Pro dipeptide + H2O = an L-alpha-amino acid + L-proline. The protein is Xaa-Pro dipeptidase (pepQ) of Lactobacillus delbrueckii subsp. lactis.